We begin with the raw amino-acid sequence, 339 residues long: Aspartate carbamoyltransferase catalytic subunit (339 aa).

Carbamoyl phosphate contacts are provided by Arg59 and Thr60. Position 87 (Lys87) interacts with L-aspartate. Residues Arg109, His142, and Gln145 each contribute to the carbamoyl phosphate site. The L-aspartate site is built by Arg182 and Arg253. Carbamoyl phosphate-binding residues include Gly294 and Pro295.

The protein belongs to the aspartate/ornithine carbamoyltransferase superfamily. ATCase family. Heterododecamer (2C3:3R2) of six catalytic PyrB chains organized as two trimers (C3), and six regulatory PyrI chains organized as three dimers (R2).

The enzyme catalyses carbamoyl phosphate + L-aspartate = N-carbamoyl-L-aspartate + phosphate + H(+). It functions in the pathway pyrimidine metabolism; UMP biosynthesis via de novo pathway; (S)-dihydroorotate from bicarbonate: step 2/3. Functionally, catalyzes the condensation of carbamoyl phosphate and aspartate to form carbamoyl aspartate and inorganic phosphate, the committed step in the de novo pyrimidine nucleotide biosynthesis pathway. This chain is Aspartate carbamoyltransferase catalytic subunit, found in Prochlorococcus marinus (strain NATL1A).